We begin with the raw amino-acid sequence, 168 residues long: Protein yop-1 (168 aa).

The Cytoplasmic portion of the chain corresponds to 1–35 (MSSPQDRAQQYIGQLDKELSKYPTLNNLEKTTGVP). The helical transmembrane segment at 36–55 (KAYAVIGLVALYFFLIIFNL) threads the bilayer. A topological domain (lumenal) is located at residue glycine 56. Residues 57–76 (GQLLTNLAGFVLPGYYSLNA) traverse the membrane as a helical segment. Residues 77–86 (LFTASKQDDT) are Cytoplasmic-facing. A helical transmembrane segment spans residues 87-103 (QWLTYWVVFSLFTVIES). At 104-105 (LI) the chain is on the lumenal side. A helical transmembrane segment spans residues 106–124 (SVVYWFPFYFTFKFVFLLW). The Cytoplasmic segment spans residues 125 to 168 (LSLPTFKGAETIFRSFLAPTLGRYFQNGSTASGLRAKADAVHTD).

It belongs to the DP1 family. In terms of assembly, oligomer.

The protein resides in the endoplasmic reticulum membrane. It is found in the golgi apparatus membrane. Its function is as follows. Required to generate and maintain the structure of the tubular endoplasmic reticulum network and the vacuole. Induces high curvature in membranes and causes membrane tubule formation. Involved in membrane/vesicle trafficking. This is Protein yop-1 (yop-1) from Neurospora crassa (strain ATCC 24698 / 74-OR23-1A / CBS 708.71 / DSM 1257 / FGSC 987).